Here is an 855-residue protein sequence, read N- to C-terminus: MICAL-like protein 1 (855 aa).

A Calponin-homology (CH) domain is found at 2 to 108 (AGPRGALLAW…YVSQYYNHFT (107 aa)). 3 disordered regions span residues 110-165 (SGQA…SSAC), 226-253 (GRSGTRPLSLQKQQPAAAAEAKDGEDSD), and 269-659 (QASS…HGFP). The span at 124 to 135 (PAAPSPTSTSPA) shows a compositional bias: low complexity. Residues 163-226 (SACAACGQRV…ERCTRLGLGG (64 aa)) enclose the LIM zinc-binding domain. Residues 269–278 (QASSEVQPHT) are compositionally biased toward polar residues. Ser293 and Ser307 each carry phosphoserine. The span at 308–325 (ESSALTPPTPRPRSSLQQ) shows a compositional bias: polar residues. A phosphothreonine mark is found at Thr313 and Thr316. Residues 356-367 (LSERMTAPRKDP) are compositionally biased toward basic and acidic residues. The NPF1 signature appears at 423–425 (NPF). The span at 425–434 (FEEEEEEEEA) shows a compositional bias: acidic residues. The span at 439-449 (VPSPAPAPPET) shows a compositional bias: pro residues. Phosphothreonine occurs at positions 461 and 463. Phosphoserine occurs at positions 464, 465, 478, and 480. The span at 499–514 (PSPALSVESLSSESSS) shows a compositional bias: low complexity. Residues 542-554 (PGTSANSVTPSAH) are compositionally biased toward polar residues. Over residues 555–570 (SSLSSSGELGQPSGEQ) the composition is skewed to low complexity. Ser613 is subject to Phosphoserine. The NPF2 signature appears at 625–627 (NPF). Residues 644-855 (KGAKPVRPPA…AKSKAPTGKS (212 aa)) form a mediates the interaction with RAB13 and intramolecular interaction with the calponin-homology (CH) domain region. Residues 663–810 (RKVQADQYIP…EEEEDKMLET (148 aa)) enclose the bMERB domain. The stretch at 679–703 (EMDSIERQLDALEHSGVLLEEKLRG) forms a coiled coil. Residues Ser682 and Ser732 each carry the phosphoserine modification. Residues 692 to 855 (HSGVLLEEKL…AKSKAPTGKS (164 aa)) form a necessary and sufficient to associate with tubular recycling endosome membranes, mediate phosphatidic acid-binding and membrane tubulation region. Positions 794 to 822 (LDEDRQREEEEDKMLETMIKKKDFQREAE) form a coiled coil. Residues 815 to 826 (KDFQREAESDSK) are compositionally biased toward basic and acidic residues. Residues 815-855 (KDFQREAESDSKKKGKFKTMKVLKLLGNKRDAKSKAPTGKS) form a disordered region.

As to quaternary structure, homooligomer. Interacts (via NPF1 motif) with EHD1 (via EH domain); the interaction is direct and probably recruits EHD1 to membranes. Interacts with EHD3 (via EH domain). Interacts with RAB35 (GTP-bound form); the interaction is direct and probably recruits MICALL1 to membranes. Interacts with ACAP2; the interaction is indirect through RAB35. Interacts with RAB8A (GTP-bound form); regulates RAB8A association with recycling endosomes. Interacts with RAB13 (GTP-bound form). Interacts with ARF6 (GTP-bound form). Interacts with PACSIN2 (via the SH3 domain). Interacts with DPYSL2.

The protein localises to the recycling endosome membrane. The protein resides in the late endosome membrane. It localises to the cell projection. Its subcellular location is the cilium membrane. It is found in the cytoplasm. The protein localises to the cytoskeleton. The protein resides in the microtubule organizing center. It localises to the centrosome. Its subcellular location is the centriole. Its function is as follows. Lipid-binding protein with higher affinity for phosphatidic acid, a lipid enriched in recycling endosome membranes. On endosome membranes, acts as a downstream effector of Rab proteins recruiting cytosolic proteins to regulate membrane tubulation. Involved in a late step of receptor-mediated endocytosis regulating for instance endocytosed-EGF receptor trafficking. Alternatively, regulates slow endocytic recycling of endocytosed proteins back to the plasma membrane. Also involved in cargo protein delivery to the plasma membrane. Plays a role in ciliogenesis coordination, recruits EHD1 to primary cilium where it is anchored to the centriole through interaction with tubulins. May indirectly play a role in neurite outgrowth. In Rattus norvegicus (Rat), this protein is MICAL-like protein 1 (Micall1).